The chain runs to 184 residues: MSTTDLTSPAHAAVESAGTTAIAEDLLARVLEPYSYKGCRYLLDARYHADDDSVLAYGNFTISESAYIRSTGHFNAVELILCFNQLAYSAFAPAVANEEIPQLRGWSLEDYFQHQLASMFIRNSSSRFNRPINPAKFSARLQCRNLQVVQRTWRYLLVPCAIEFWDEDGGAASGEVELAALNIP.

This sequence belongs to the FcoT family.

The enzyme catalyses a (3R)-3-[(carboxymethyl)amino]fatty acid + holo-[ACP] + H(+) = a (2E)-enoyl-[ACP] + glycine + H2O. It carries out the reaction (3R)-3-[(carboxylmethyl)amino]decanoate + holo-[ACP] + H(+) = (2E)-decenoyl-[ACP] + glycine + H2O. Its function is as follows. Involved in the biosynthesis of a unique class of isonitrile lipopeptides (INLPs) that seem to play a role in metal acquisition in M.marinum. Catalyzes a Michael addition of glycine to the beta-position of an alpha,beta-unsaturated fatty acyl-[ACP], producing a (3R)-3-[(carboxymethyl)amino]fatty acid. Acts on the (2E)-decenoyl moiety loaded on the acyl-carrier protein MmaB, forming the product (3R)-3-[(carboxymethyl)amino]decanoate released from MmaB. The polypeptide is (2E)-enoyl-[ACP] glycyltransferase (Mycobacterium marinum (strain ATCC BAA-535 / M)).